Here is a 325-residue protein sequence, read N- to C-terminus: Tetraacyldisaccharide 4'-kinase (325 aa).

An ATP-binding site is contributed by 55 to 62 (TAGGNGKT).

The protein belongs to the LpxK family.

The catalysed reaction is a lipid A disaccharide + ATP = a lipid IVA + ADP + H(+). It functions in the pathway glycolipid biosynthesis; lipid IV(A) biosynthesis; lipid IV(A) from (3R)-3-hydroxytetradecanoyl-[acyl-carrier-protein] and UDP-N-acetyl-alpha-D-glucosamine: step 6/6. Its function is as follows. Transfers the gamma-phosphate of ATP to the 4'-position of a tetraacyldisaccharide 1-phosphate intermediate (termed DS-1-P) to form tetraacyldisaccharide 1,4'-bis-phosphate (lipid IVA). The polypeptide is Tetraacyldisaccharide 4'-kinase (Salmonella agona (strain SL483)).